Here is a 481-residue protein sequence, read N- to C-terminus: GDP-fucose protein O-fucosyltransferase 3 (481 aa).

The Cytoplasmic segment spans residues 1–8 (MVRFQRRK). A helical; Signal-anchor for type II membrane protein membrane pass occupies residues 9-31 (LLASCLCVTATVFLMVTLQVVVE). Residues 32–481 (LGKFERKKLK…EEFWALVFKD (450 aa)) lie on the Lumenal side of the membrane. Residues asparagine 110, asparagine 168, and asparagine 318 are each glycosylated (N-linked (GlcNAc...) asparagine). Cysteine 389 and cysteine 392 form a disulfide bridge. A glycan (N-linked (GlcNAc...) asparagine) is linked at asparagine 468.

This sequence belongs to the glycosyltransferase 10 family. As to expression, widely expressed, with a higher expression in liver and thymus.

The protein localises to the endoplasmic reticulum membrane. The catalysed reaction is L-threonyl-[protein] + GDP-beta-L-fucose = 3-O-(alpha-L-fucosyl)-L-threonyl-[protein] + GDP + H(+). The enzyme catalyses L-seryl-[protein] + GDP-beta-L-fucose = 3-O-(alpha-L-fucosyl)-L-seryl-[protein] + GDP + H(+). It participates in protein modification; protein glycosylation. In terms of biological role, protein O-fucosyltransferase that specifically catalyzes O-fucosylation of serine or threonine residues in EMI domains of target proteins, such as MMRN1, MMRN2 and EMID1. Attaches fucose through an O-glycosidic linkage. O-fucosylation of EMI domain-containing proteins may be required for facilitating protein folding and secretion. May also show alpha-(1,3)-fucosyltransferase activity toward the innermost N-acetyl glucosamine (GlcNAc) residue in biantennary N-glycan acceptors. However, this was tested with a library of synthetic substrates and this activity is unsure in vivo. May be involved in biosynthesis of Lewis X-carrying biantennary N-glycans that regulate neuron stem cell self-renewal during brain development. The protein is GDP-fucose protein O-fucosyltransferase 3 of Mus musculus (Mouse).